Here is a 509-residue protein sequence, read N- to C-terminus: Ethanolamine-phosphate phospho-lyase (509 aa).

N6-(pyridoxal phosphate)lysine is present on K279. Positions 451–474 (EKTSAKRKVHNENSGDTNAKEKET) are enriched in basic and acidic residues. The disordered stretch occupies residues 451–509 (EKTSAKRKVHNENSGDTNAKEKETCSSNSQERNPNDHAYRQSNGLHPESPTFTRKRIRT).

It belongs to the class-III pyridoxal-phosphate-dependent aminotransferase family. Homotetramer. It depends on pyridoxal 5'-phosphate as a cofactor.

The protein resides in the mitochondrion. The enzyme catalyses phosphoethanolamine + H2O = acetaldehyde + NH4(+) + phosphate. Its function is as follows. Catalyzes the pyridoxal-phosphate-dependent breakdown of phosphoethanolamine, converting it to ammonia, inorganic phosphate and acetaldehyde. The protein is Ethanolamine-phosphate phospho-lyase (etnppl) of Xenopus laevis (African clawed frog).